We begin with the raw amino-acid sequence, 318 residues long: Acetylglutamate kinase (318 aa).

Substrate is bound by residues 80–81 (GG), arginine 102, and asparagine 203.

The protein belongs to the acetylglutamate kinase family. ArgB subfamily.

It localises to the cytoplasm. The enzyme catalyses N-acetyl-L-glutamate + ATP = N-acetyl-L-glutamyl 5-phosphate + ADP. It functions in the pathway amino-acid biosynthesis; L-arginine biosynthesis; N(2)-acetyl-L-ornithine from L-glutamate: step 2/4. In terms of biological role, catalyzes the ATP-dependent phosphorylation of N-acetyl-L-glutamate. In Bifidobacterium adolescentis (strain ATCC 15703 / DSM 20083 / NCTC 11814 / E194a), this protein is Acetylglutamate kinase.